Reading from the N-terminus, the 143-residue chain is Putative pre-16S rRNA nuclease (143 aa).

Belongs to the YqgF nuclease family.

It is found in the cytoplasm. Could be a nuclease involved in processing of the 5'-end of pre-16S rRNA. This chain is Putative pre-16S rRNA nuclease, found in Lactococcus lactis subsp. cremoris (strain MG1363).